We begin with the raw amino-acid sequence, 189 residues long: Cancer/testis antigen family 45 member A5 (189 aa).

Positions 1–23 (MTDKTEKVAVDPETVFKRPRECD) are enriched in basic and acidic residues. Disordered stretches follow at residues 1 to 27 (MTDKTEKVAVDPETVFKRPRECDSPSY) and 82 to 118 (DGMMQKPGSNAPVGGNVTSSFSGDDLECRETASSPKS).

It belongs to the CT45 family. In terms of tissue distribution, testis specific. Expressed in cancer cell lines.

It is found in the nucleus. The chain is Cancer/testis antigen family 45 member A5 from Homo sapiens (Human).